The primary structure comprises 157 residues: Protein E6 (157 aa).

2 zinc fingers span residues 41 to 77 and 114 to 150; these read CNFC…CRVC and CQTC…CRQC.

It belongs to the papillomaviridae E6 protein family. Forms homodimers. Interacts with ubiquitin-protein ligase UBE3A/E6-AP; this interaction stimulates UBE3A ubiquitin activity. Interacts with host BAK1.

It is found in the host cytoplasm. It localises to the host nucleus. Plays a major role in the induction and maintenance of cellular transformation. E6 associates with host UBE3A/E6-AP ubiquitin-protein ligase and modulates its activity. Protects host keratinocytes from apoptosis by mediating the degradation of host BAK1. May also inhibit host immune response. This Human papillomavirus 36 protein is Protein E6.